Reading from the N-terminus, the 42-residue chain is Photosystem I reaction center subunit IX (42 aa).

Residues 7-27 (YLSTAPVLAAVWFGFLAGLLI) traverse the membrane as a helical segment.

Belongs to the PsaJ family.

The protein resides in the plastid. The protein localises to the chloroplast thylakoid membrane. Functionally, may help in the organization of the PsaE and PsaF subunits. The polypeptide is Photosystem I reaction center subunit IX (Nephroselmis olivacea (Green alga)).